We begin with the raw amino-acid sequence, 173 residues long: Photosystem I assembly protein Ycf3 (173 aa).

3 TPR repeats span residues 35–68 (AYIYYREGFAAQNNGDYSEALENYEESLKLEENP), 72–105 (GETLKNMAIIYMSNGDEDRALETYVKALDQNPKQ), and 120–153 (GRSAQQRGLQDESDIWFDKAADVWTKAVRLYPGG).

The protein belongs to the Ycf3 family.

The protein resides in the cellular thylakoid membrane. Its function is as follows. Essential for the assembly of the photosystem I (PSI) complex. May act as a chaperone-like factor to guide the assembly of the PSI subunits. This chain is Photosystem I assembly protein Ycf3, found in Prochlorococcus marinus (strain MIT 9211).